The chain runs to 1170 residues: Chromosome partition protein Smc (1170 aa).

32–39 is a binding site for ATP; the sequence is PNGCGKSN. Coiled-coil stretches lie at residues 169-215, 245-365, and 401-508; these read GVSK…AVVA, DRQR…DAAA, and EAAH…TQGK. Positions 520 to 623 constitute an SMC hinge domain; it reads ALPRLWKKLH…VADDLAQALA (104 aa). Coiled coils occupy residues 664-944 and 983-1020; these read QEIE…KEKL and ERKV…LQAT.

Belongs to the SMC family. Homodimer.

Its subcellular location is the cytoplasm. Its function is as follows. Required for chromosome condensation and partitioning. In Burkholderia pseudomallei (strain 1710b), this protein is Chromosome partition protein Smc.